Here is a 360-residue protein sequence, read N- to C-terminus: Pyrimidine monooxygenase RutA (360 aa).

FMN is bound by residues 49–50, N115, E124, 140–141, and S190; these read IK and RY.

Belongs to the NtaA/SnaA/DszA monooxygenase family. RutA subfamily.

It carries out the reaction uracil + FMNH2 + NADH + O2 = (Z)-3-ureidoacrylate + FMN + NAD(+) + H2O + H(+). It catalyses the reaction thymine + FMNH2 + NADH + O2 = (Z)-2-methylureidoacrylate + FMN + NAD(+) + H2O + H(+). Functionally, catalyzes the pyrimidine ring opening between N-3 and C-4 by an unusual flavin hydroperoxide-catalyzed mechanism, adding oxygen atoms in the process to yield ureidoacrylate peracid, that immediately reacts with FMN forming ureidoacrylate and FMN-N(5)-oxide. The FMN-N(5)-oxide reacts spontaneously with NADH to produce FMN. Requires the flavin reductase RutF to regenerate FMN in vivo. The chain is Pyrimidine monooxygenase RutA from Pseudomonas savastanoi pv. phaseolicola (strain 1448A / Race 6) (Pseudomonas syringae pv. phaseolicola (strain 1448A / Race 6)).